The following is a 398-amino-acid chain: Succinate--CoA ligase [ADP-forming] subunit beta (398 aa).

Residues 9-254 (KRLLHTYGAP…LSEEDEKEIE (246 aa)) enclose the ATP-grasp domain. Residues Lys-46, 53–55 (GRG), Glu-109, Ala-112, and Glu-117 contribute to the ATP site. Residues Asn-209 and Asp-223 each coordinate Mg(2+). Substrate contacts are provided by residues Asn-274 and 331–333 (GIM).

It belongs to the succinate/malate CoA ligase beta subunit family. As to quaternary structure, heterotetramer of two alpha and two beta subunits. Mg(2+) serves as cofactor.

The catalysed reaction is succinate + ATP + CoA = succinyl-CoA + ADP + phosphate. The enzyme catalyses GTP + succinate + CoA = succinyl-CoA + GDP + phosphate. It participates in carbohydrate metabolism; tricarboxylic acid cycle; succinate from succinyl-CoA (ligase route): step 1/1. Succinyl-CoA synthetase functions in the citric acid cycle (TCA), coupling the hydrolysis of succinyl-CoA to the synthesis of either ATP or GTP and thus represents the only step of substrate-level phosphorylation in the TCA. The beta subunit provides nucleotide specificity of the enzyme and binds the substrate succinate, while the binding sites for coenzyme A and phosphate are found in the alpha subunit. The polypeptide is Succinate--CoA ligase [ADP-forming] subunit beta (Brucella anthropi (strain ATCC 49188 / DSM 6882 / CCUG 24695 / JCM 21032 / LMG 3331 / NBRC 15819 / NCTC 12168 / Alc 37) (Ochrobactrum anthropi)).